Here is a 468-residue protein sequence, read N- to C-terminus: FeMo cofactor biosynthesis protein NifB (468 aa).

The Radical SAM core domain maps to 40 to 289 (HHRFARMHLP…PQMTHCHQCR (250 aa)). Residues Cys54 and Cys58 each coordinate [4Fe-4S] cluster. Tyr60 provides a ligand contact to S-adenosyl-L-methionine. Residue Cys61 participates in [4Fe-4S] cluster binding. S-adenosyl-L-methionine contacts are provided by Gly108, Thr160, and Ile212. Positions 285 and 288 each coordinate [4Fe-4S] cluster.

It belongs to the radical SAM superfamily. NifB family. It depends on [4Fe-4S] cluster as a cofactor.

It functions in the pathway cofactor biosynthesis; Fe-Mo cofactor biosynthesis. In terms of biological role, involved in the biosynthesis of the iron-molybdenum cofactor (FeMo-co or M-cluster) found in the dinitrogenase enzyme of the nitrogenase complex in nitrogen-fixing microorganisms. NifB catalyzes the crucial step of radical SAM-dependent carbide insertion that occurs concomitant with the insertion of a 9th sulfur and the rearrangement/coupling of two [4Fe-4S] clusters into a [8Fe-9S-C] cluster, the precursor to the M-cluster. The polypeptide is FeMo cofactor biosynthesis protein NifB (nifB) (Klebsiella pneumoniae).